The primary structure comprises 28 residues: Potassium channel toxin alpha-KTx 9.3 (28 aa).

3 disulfide bridges follow: Cys-3–Cys-19, Cys-6–Cys-24, and Cys-10–Cys-26.

This sequence belongs to the short scorpion toxin superfamily. Potassium channel inhibitor family. Alpha-KTx 09 subfamily. Expressed by the venom gland.

The protein localises to the secreted. Its function is as follows. Inhibits voltage-gated potassium channels. This is Potassium channel toxin alpha-KTx 9.3 from Aegaeobuthus nigrocinctus (Scorpion).